The sequence spans 326 residues: Tetraacyldisaccharide 4'-kinase (326 aa).

Position 54-61 (54-61) interacts with ATP; it reads SVGGTGKT.

Belongs to the LpxK family.

The enzyme catalyses a lipid A disaccharide + ATP = a lipid IVA + ADP + H(+). It functions in the pathway glycolipid biosynthesis; lipid IV(A) biosynthesis; lipid IV(A) from (3R)-3-hydroxytetradecanoyl-[acyl-carrier-protein] and UDP-N-acetyl-alpha-D-glucosamine: step 6/6. Functionally, transfers the gamma-phosphate of ATP to the 4'-position of a tetraacyldisaccharide 1-phosphate intermediate (termed DS-1-P) to form tetraacyldisaccharide 1,4'-bis-phosphate (lipid IVA). The chain is Tetraacyldisaccharide 4'-kinase from Rickettsia canadensis (strain McKiel).